A 146-amino-acid polypeptide reads, in one-letter code: Large ribosomal subunit protein uL15 (146 aa).

A compositionally biased stretch (basic and acidic residues) spans 1-18 (MKLHELKAAEGTRKERNR). The tract at residues 1–58 (MKLHELKAAEGTRKERNRVGRGMSSGNGKTSGRGHKGQKARSGGGVRPGFEGGQMPLF) is disordered. The segment covering 42–52 (SGGGVRPGFEG) has biased composition (gly residues).

The protein belongs to the universal ribosomal protein uL15 family. As to quaternary structure, part of the 50S ribosomal subunit.

Binds to the 23S rRNA. The polypeptide is Large ribosomal subunit protein uL15 (Oceanobacillus iheyensis (strain DSM 14371 / CIP 107618 / JCM 11309 / KCTC 3954 / HTE831)).